Consider the following 591-residue polypeptide: Aspartate--tRNA(Asp/Asn) ligase (591 aa).

Residue Glu174 coordinates L-aspartate. The tract at residues 198 to 201 (QLFK) is aspartate. An L-aspartate-binding site is contributed by Arg220. ATP contacts are provided by residues 220-222 (RDE) and Gln229. His450 contributes to the L-aspartate binding site. Residue Glu483 participates in ATP binding. Arg490 is an L-aspartate binding site. 535-538 (GLDR) is an ATP binding site.

This sequence belongs to the class-II aminoacyl-tRNA synthetase family. Type 1 subfamily. Homodimer.

It localises to the cytoplasm. The catalysed reaction is tRNA(Asx) + L-aspartate + ATP = L-aspartyl-tRNA(Asx) + AMP + diphosphate. Functionally, aspartyl-tRNA synthetase with relaxed tRNA specificity since it is able to aspartylate not only its cognate tRNA(Asp) but also tRNA(Asn). Reaction proceeds in two steps: L-aspartate is first activated by ATP to form Asp-AMP and then transferred to the acceptor end of tRNA(Asp/Asn). The protein is Aspartate--tRNA(Asp/Asn) ligase of Pseudomonas putida (strain W619).